Consider the following 498-residue polypeptide: Guanosine-5'-triphosphate,3'-diphosphate pyrophosphatase (498 aa).

Belongs to the GppA/Ppx family. GppA subfamily.

The catalysed reaction is guanosine 3'-diphosphate 5'-triphosphate + H2O = guanosine 3',5'-bis(diphosphate) + phosphate + H(+). Its pathway is purine metabolism; ppGpp biosynthesis; ppGpp from GTP: step 2/2. Its function is as follows. Catalyzes the conversion of pppGpp to ppGpp. Guanosine pentaphosphate (pppGpp) is a cytoplasmic signaling molecule which together with ppGpp controls the 'stringent response', an adaptive process that allows bacteria to respond to amino acid starvation, resulting in the coordinated regulation of numerous cellular activities. In Serratia proteamaculans (strain 568), this protein is Guanosine-5'-triphosphate,3'-diphosphate pyrophosphatase.